Here is a 263-residue protein sequence, read N- to C-terminus: Phosphatidylglycerol--prolipoprotein diacylglyceryl transferase (263 aa).

The next 4 helical transmembrane spans lie at Ile-7–Val-27, Leu-50–Tyr-70, Thr-85–Ile-105, and Ile-112–Gly-132. Arg-133 serves as a coordination point for a 1,2-diacyl-sn-glycero-3-phospho-(1'-sn-glycerol). Helical transmembrane passes span Leu-169–Leu-189, Gly-197–Phe-217, and Met-233–Leu-253.

The protein belongs to the Lgt family.

Its subcellular location is the cell membrane. It catalyses the reaction L-cysteinyl-[prolipoprotein] + a 1,2-diacyl-sn-glycero-3-phospho-(1'-sn-glycerol) = an S-1,2-diacyl-sn-glyceryl-L-cysteinyl-[prolipoprotein] + sn-glycerol 1-phosphate + H(+). It participates in protein modification; lipoprotein biosynthesis (diacylglyceryl transfer). Catalyzes the transfer of the diacylglyceryl group from phosphatidylglycerol to the sulfhydryl group of the N-terminal cysteine of a prolipoprotein, the first step in the formation of mature lipoproteins. This is Phosphatidylglycerol--prolipoprotein diacylglyceryl transferase from Wolbachia sp. subsp. Brugia malayi (strain TRS).